The chain runs to 115 residues: Tyrosine-protein phosphatase 18 (115 aa).

Residues 1–115 (WLMIVEQKCR…ETGSDAPMVV (115 aa)) enclose the Tyrosine-protein phosphatase domain. Aspartate 83 contacts substrate.

It belongs to the protein-tyrosine phosphatase family.

The catalysed reaction is O-phospho-L-tyrosyl-[protein] + H2O = L-tyrosyl-[protein] + phosphate. This Styela plicata (Wrinkled sea squirt) protein is Tyrosine-protein phosphatase 18 (STY-18).